The primary structure comprises 232 residues: 5'-methylthioadenosine/S-adenosylhomocysteine nucleosidase (232 aa).

The Proton acceptor role is filled by Glu14. Substrate-binding positions include Gly80, Val154, and 175–176 (ME). Residue Asp199 is the Proton donor of the active site.

The protein belongs to the PNP/UDP phosphorylase family. MtnN subfamily.

The catalysed reaction is S-adenosyl-L-homocysteine + H2O = S-(5-deoxy-D-ribos-5-yl)-L-homocysteine + adenine. The enzyme catalyses S-methyl-5'-thioadenosine + H2O = 5-(methylsulfanyl)-D-ribose + adenine. It catalyses the reaction 5'-deoxyadenosine + H2O = 5-deoxy-D-ribose + adenine. It participates in amino-acid biosynthesis; L-methionine biosynthesis via salvage pathway; S-methyl-5-thio-alpha-D-ribose 1-phosphate from S-methyl-5'-thioadenosine (hydrolase route): step 1/2. In terms of biological role, catalyzes the irreversible cleavage of the glycosidic bond in both 5'-methylthioadenosine (MTA) and S-adenosylhomocysteine (SAH/AdoHcy) to adenine and the corresponding thioribose, 5'-methylthioribose and S-ribosylhomocysteine, respectively. Also cleaves 5'-deoxyadenosine, a toxic by-product of radical S-adenosylmethionine (SAM) enzymes, into 5-deoxyribose and adenine. This chain is 5'-methylthioadenosine/S-adenosylhomocysteine nucleosidase, found in Actinobacillus pleuropneumoniae serotype 3 (strain JL03).